The chain runs to 550 residues: Gamma-aminobutyric acid receptor subunit beta (550 aa).

The N-terminal stretch at 1–24 is a signal peptide; that stretch reads MRRSKTRRIFHVSITLLLVSTIFC. The Extracellular segment spans residues 25–264; sequence QNGTKPHNNS…FQLRRSVGYF (240 aa). 6 N-linked (GlcNAc...) asparagine glycosylation sites follow: asparagine 26, asparagine 32, asparagine 33, asparagine 45, asparagine 53, and asparagine 193. Residues cysteine 180 and cysteine 194 are joined by a disulfide bond. The next 3 helical transmembrane spans lie at 265–285, 292–311, and 324–344; these read IFQTYLPCVLIVMLSWVSFWI, ARVALGITTVLTMTTISTGV, and IDIYLVMCFVFVFAALLEYAA. Topologically, residues 345–527 are cytoplasmic; sequence VNYSYWGRER…DVNLIDKYSR (183 aa). The interval 405–465 is disordered; it reads AMSTSNTAAQ…TTSLKGARPH (61 aa). Over residues 406–421 the composition is skewed to polar residues; that stretch reads MSTSNTAAQNNNFEST. Residues 528-548 traverse the membrane as a helical segment; sequence VVFPVCFIVFNLFYWSYYMMV.

The protein belongs to the ligand-gated ion channel (TC 1.A.9) family. Gamma-aminobutyric acid receptor (TC 1.A.9.5) subfamily.

The protein resides in the postsynaptic cell membrane. Its subcellular location is the cell membrane. Its function is as follows. GABA, an inhibitory neurotransmitter, mediates neuronal inhibition by binding to the GABA receptor and opening an integral chloride channel. This Caenorhabditis elegans protein is Gamma-aminobutyric acid receptor subunit beta (gab-1).